Consider the following 589-residue polypeptide: Isocitrate dehydrogenase kinase/phosphatase (589 aa).

ATP-binding positions include 317-323 and Lys338; that span reads AAGIKGM. Asp373 is a catalytic residue.

The protein belongs to the AceK family.

It localises to the cytoplasm. It catalyses the reaction L-seryl-[isocitrate dehydrogenase] + ATP = O-phospho-L-seryl-[isocitrate dehydrogenase] + ADP + H(+). Functionally, bifunctional enzyme which can phosphorylate or dephosphorylate isocitrate dehydrogenase (IDH) on a specific serine residue. This is a regulatory mechanism which enables bacteria to bypass the Krebs cycle via the glyoxylate shunt in response to the source of carbon. When bacteria are grown on glucose, IDH is fully active and unphosphorylated, but when grown on acetate or ethanol, the activity of IDH declines drastically concomitant with its phosphorylation. The chain is Isocitrate dehydrogenase kinase/phosphatase from Colwellia psychrerythraea (strain 34H / ATCC BAA-681) (Vibrio psychroerythus).